The following is a 411-amino-acid chain: CCA-adding enzyme (411 aa).

ATP contacts are provided by Gly-8 and Arg-11. The CTP site is built by Gly-8 and Arg-11. Residues Glu-21 and Asp-23 each contribute to the Mg(2+) site. Arg-91, Arg-137, and Arg-140 together coordinate ATP. CTP-binding residues include Arg-91, Arg-137, and Arg-140. One can recognise an HD domain in the interval 227 to 328; the sequence is LGNQTMTRLS…MTIFQAFDCW (102 aa).

Belongs to the tRNA nucleotidyltransferase/poly(A) polymerase family. Bacterial CCA-adding enzyme type 2 subfamily. Requires Mg(2+) as cofactor.

The catalysed reaction is a tRNA precursor + 2 CTP + ATP = a tRNA with a 3' CCA end + 3 diphosphate. It catalyses the reaction a tRNA with a 3' CCA end + 2 CTP + ATP = a tRNA with a 3' CCACCA end + 3 diphosphate. Its function is as follows. Catalyzes the addition and repair of the essential 3'-terminal CCA sequence in tRNAs without using a nucleic acid template. Adds these three nucleotides in the order of C, C, and A to the tRNA nucleotide-73, using CTP and ATP as substrates and producing inorganic pyrophosphate. tRNA 3'-terminal CCA addition is required both for tRNA processing and repair. Also involved in tRNA surveillance by mediating tandem CCA addition to generate a CCACCA at the 3' terminus of unstable tRNAs. While stable tRNAs receive only 3'-terminal CCA, unstable tRNAs are marked with CCACCA and rapidly degraded. The sequence is that of CCA-adding enzyme from Blochmanniella floridana.